A 347-amino-acid polypeptide reads, in one-letter code: 3-isopropylmalate dehydrogenase (347 aa).

Positions 95, 105, 129, and 220 each coordinate substrate. The Mg(2+) site is built by aspartate 220, aspartate 244, and aspartate 248. Residue 280 to 292 participates in NAD(+) binding; that stretch reads GSAPDIAGQGKAD.

The protein belongs to the isocitrate and isopropylmalate dehydrogenases family. LeuB type 2 subfamily. As to quaternary structure, homodimer. It depends on Mg(2+) as a cofactor. The cofactor is Mn(2+).

The protein resides in the cytoplasm. It catalyses the reaction (2R,3S)-3-isopropylmalate + NAD(+) = 4-methyl-2-oxopentanoate + CO2 + NADH. It functions in the pathway amino-acid biosynthesis; L-leucine biosynthesis; L-leucine from 3-methyl-2-oxobutanoate: step 3/4. Catalyzes the oxidation of 3-carboxy-2-hydroxy-4-methylpentanoate (3-isopropylmalate) to 3-carboxy-4-methyl-2-oxopentanoate. The product decarboxylates to 4-methyl-2 oxopentanoate. The chain is 3-isopropylmalate dehydrogenase from Beutenbergia cavernae (strain ATCC BAA-8 / DSM 12333 / CCUG 43141 / JCM 11478 / NBRC 16432 / NCIMB 13614 / HKI 0122).